Consider the following 273-residue polypeptide: 2,3,4,5-tetrahydropyridine-2,6-dicarboxylate N-succinyltransferase (273 aa).

It belongs to the transferase hexapeptide repeat family.

The protein resides in the cytoplasm. The catalysed reaction is (S)-2,3,4,5-tetrahydrodipicolinate + succinyl-CoA + H2O = (S)-2-succinylamino-6-oxoheptanedioate + CoA. It functions in the pathway amino-acid biosynthesis; L-lysine biosynthesis via DAP pathway; LL-2,6-diaminopimelate from (S)-tetrahydrodipicolinate (succinylase route): step 1/3. The chain is 2,3,4,5-tetrahydropyridine-2,6-dicarboxylate N-succinyltransferase from Bordetella petrii (strain ATCC BAA-461 / DSM 12804 / CCUG 43448).